We begin with the raw amino-acid sequence, 390 residues long: Chorismate synthase (390 aa).

Residues R40 and R46 each coordinate NADP(+). FMN is bound by residues 129–131, 249–250, G294, 309–313, and R335; these read RAS, QA, and KPIPT.

It belongs to the chorismate synthase family. In terms of assembly, homotetramer. FMNH2 serves as cofactor.

It carries out the reaction 5-O-(1-carboxyvinyl)-3-phosphoshikimate = chorismate + phosphate. The protein operates within metabolic intermediate biosynthesis; chorismate biosynthesis; chorismate from D-erythrose 4-phosphate and phosphoenolpyruvate: step 7/7. In terms of biological role, catalyzes the anti-1,4-elimination of the C-3 phosphate and the C-6 proR hydrogen from 5-enolpyruvylshikimate-3-phosphate (EPSP) to yield chorismate, which is the branch point compound that serves as the starting substrate for the three terminal pathways of aromatic amino acid biosynthesis. This reaction introduces a second double bond into the aromatic ring system. The sequence is that of Chorismate synthase from Desulforudis audaxviator (strain MP104C).